The chain runs to 480 residues: Cysteine--tRNA ligase (480 aa).

Cysteine 27 contributes to the Zn(2+) binding site. The short motif at 29–39 (PTVYNYAHIGN) is the 'HIGH' region element. Residues cysteine 221, histidine 246, and glutamate 250 each contribute to the Zn(2+) site. Residues 278–282 (KMSKS) carry the 'KMSKS' region motif. Lysine 281 lines the ATP pocket.

Belongs to the class-I aminoacyl-tRNA synthetase family. Monomer. The cofactor is Zn(2+).

The protein resides in the cytoplasm. It carries out the reaction tRNA(Cys) + L-cysteine + ATP = L-cysteinyl-tRNA(Cys) + AMP + diphosphate. In Borreliella afzelii (strain PKo) (Borrelia afzelii), this protein is Cysteine--tRNA ligase.